We begin with the raw amino-acid sequence, 115 residues long: uncharacterized protein (115 aa).

3 helical membrane passes run 1 to 21, 33 to 53, and 54 to 74; these read MFLAGVLCMCAAAASALFGSW, ALALRAMAPTQLAAAVMLAAG, and GVVAVAAPGHTALMVVIVCIA.

The protein to M.leprae ML0030.

It is found in the cell membrane. This is an uncharacterized protein from Mycobacterium tuberculosis (strain CDC 1551 / Oshkosh).